A 211-amino-acid chain; its full sequence is RING finger protein narya (211 aa).

Residues 6 to 47 form an RING-type zinc finger; it reads CNKCFRHRKTDPAVPFHLTQCRHVICGPCLGQSSLEKNCPLC. Positions 149-211 are disordered; sequence RRRHSAGERF…FGSDTKGFRL (63 aa). The span at 153–165 shows a compositional bias: basic and acidic residues; that stretch reads SAGERFHTPEFKE. Over residues 172–184 the composition is skewed to low complexity; it reads STSDKSPSDMPSD.

May interact with itself, with nenya and vilya through its RING-type zinc finger. As to expression, expressed in nurse cell and pro-oocytes (at protein level).

The protein resides in the chromosome. In terms of biological role, required for the formation of DNA double-strand breaks (DSBs) together with nenya and vilya during the meiotic recombination process. Plays a role in DSBs processing into crossovers. Plays a redundant role with nenya in chromosome segregation during female meiosis. The protein is RING finger protein narya of Drosophila melanogaster (Fruit fly).